We begin with the raw amino-acid sequence, 341 residues long: Pectate trisaccharide-lyase (341 aa).

The signal sequence occupies residues 1–27 (MKKLISIIFIFVLGVVGSLTAAVSAEA). Residues 28-39 (ASALNSGKVNPL) constitute a propeptide that is removed on maturation. PbH1 repeat units lie at residues 131–156 (ANNI…GIEG) and 158–186 (SKNI…FDVK). The Ca(2+) site is built by Asp-150, Asp-180, and Asp-184. Arg-233 is a catalytic residue. PbH1 repeat units lie at residues 262–283 (GARI…VSWY) and 287–322 (PGYW…SLDN).

This sequence belongs to the polysaccharide lyase 1 family. Ca(2+) is required as a cofactor.

It localises to the secreted. The enzyme catalyses eliminative cleavage of unsaturated trigalacturonate as the major product from the reducing end of polygalacturonic acid/pectate.. Its function is as follows. Cleaves unsaturated oligo-galacturonides from pectin. The major product is trigalacturonate; digalacturonate and tetragalacturonate are also produced. Activity on methylated pectins decreases with an increasing degree of methylation. The protein is Pectate trisaccharide-lyase of Bacillus licheniformis (strain ATCC 14580 / DSM 13 / JCM 2505 / CCUG 7422 / NBRC 12200 / NCIMB 9375 / NCTC 10341 / NRRL NRS-1264 / Gibson 46).